A 728-amino-acid chain; its full sequence is Catalase-peroxidase 1 (728 aa).

The tryptophyl-tyrosyl-methioninium (Trp-Tyr) (with M-244) cross-link spans 91–218 (WHSAGTYRIA…LAAVQMGLIY (128 aa)). The active-site Proton acceptor is the histidine 92. Residues 218–244 (YVNPEGPDGNPDPVAAARDIRDTFARM) constitute a cross-link (tryptophyl-tyrosyl-methioninium (Tyr-Met) (with W-91)). Position 259 (histidine 259) interacts with heme b.

Belongs to the peroxidase family. Peroxidase/catalase subfamily. Homodimer or homotetramer. Requires heme b as cofactor. Post-translationally, formation of the three residue Trp-Tyr-Met cross-link is important for the catalase, but not the peroxidase activity of the enzyme.

The enzyme catalyses H2O2 + AH2 = A + 2 H2O. It carries out the reaction 2 H2O2 = O2 + 2 H2O. In terms of biological role, bifunctional enzyme with both catalase and broad-spectrum peroxidase activity. This Burkholderia ambifaria (strain ATCC BAA-244 / DSM 16087 / CCUG 44356 / LMG 19182 / AMMD) (Burkholderia cepacia (strain AMMD)) protein is Catalase-peroxidase 1.